The chain runs to 130 residues: Large ribosomal subunit protein bL12 (130 aa).

This sequence belongs to the bacterial ribosomal protein bL12 family. Homodimer. Part of the ribosomal stalk of the 50S ribosomal subunit. Forms a multimeric L10(L12)X complex, where L10 forms an elongated spine to which 2 to 4 L12 dimers bind in a sequential fashion. Binds GTP-bound translation factors.

Functionally, forms part of the ribosomal stalk which helps the ribosome interact with GTP-bound translation factors. Is thus essential for accurate translation. The sequence is that of Large ribosomal subunit protein bL12 from Synechococcus sp. (strain RCC307).